An 81-amino-acid polypeptide reads, in one-letter code: Accessory gland protein Acp63F (81 aa).

The signal sequence occupies residues 1-16; it reads MKAIIVFILFISSVHA.

In terms of tissue distribution, main cells of accessory gland and seminal fluid.

Its subcellular location is the secreted. Its function is as follows. Responsible for physiological and behavioral changes in mated female flies. The sequence is that of Accessory gland protein Acp63F (Acp63F) from Drosophila melanogaster (Fruit fly).